The following is a 429-amino-acid chain: D-inositol 3-phosphate glycosyltransferase (429 aa).

H20 serves as a coordination point for 1D-myo-inositol 3-phosphate. Residues 26–27 and G34 contribute to the UDP-N-acetyl-alpha-D-glucosamine site; that span reads QP. 1D-myo-inositol 3-phosphate-binding positions include 31-36, K89, Y122, T146, and R166; that span reads DAGGMN. R240, K245, and Q306 together coordinate UDP-N-acetyl-alpha-D-glucosamine. Mg(2+) is bound by residues Y315, R316, and A318. E328 and E336 together coordinate UDP-N-acetyl-alpha-D-glucosamine. T342 contacts Mg(2+).

It belongs to the glycosyltransferase group 1 family. MshA subfamily. Homodimer.

It catalyses the reaction 1D-myo-inositol 3-phosphate + UDP-N-acetyl-alpha-D-glucosamine = 1D-myo-inositol 2-acetamido-2-deoxy-alpha-D-glucopyranoside 3-phosphate + UDP + H(+). Functionally, catalyzes the transfer of a N-acetyl-glucosamine moiety to 1D-myo-inositol 3-phosphate to produce 1D-myo-inositol 2-acetamido-2-deoxy-glucopyranoside 3-phosphate in the mycothiol biosynthesis pathway. This is D-inositol 3-phosphate glycosyltransferase from Nocardiopsis dassonvillei (strain ATCC 23218 / DSM 43111 / CIP 107115 / JCM 7437 / KCTC 9190 / NBRC 14626 / NCTC 10488 / NRRL B-5397 / IMRU 509) (Actinomadura dassonvillei).